The chain runs to 353 residues: Phosphoribosylformylglycinamidine cyclo-ligase (353 aa).

Belongs to the AIR synthase family.

It is found in the cytoplasm. It carries out the reaction 2-formamido-N(1)-(5-O-phospho-beta-D-ribosyl)acetamidine + ATP = 5-amino-1-(5-phospho-beta-D-ribosyl)imidazole + ADP + phosphate + H(+). Its pathway is purine metabolism; IMP biosynthesis via de novo pathway; 5-amino-1-(5-phospho-D-ribosyl)imidazole from N(2)-formyl-N(1)-(5-phospho-D-ribosyl)glycinamide: step 2/2. This is Phosphoribosylformylglycinamidine cyclo-ligase from Symbiobacterium thermophilum (strain DSM 24528 / JCM 14929 / IAM 14863 / T).